The following is a 198-amino-acid chain: Adenine phosphoribosyltransferase (198 aa).

It belongs to the purine/pyrimidine phosphoribosyltransferase family. Homodimer.

It localises to the cytoplasm. It catalyses the reaction AMP + diphosphate = 5-phospho-alpha-D-ribose 1-diphosphate + adenine. Its pathway is purine metabolism; AMP biosynthesis via salvage pathway; AMP from adenine: step 1/1. Functionally, catalyzes a salvage reaction resulting in the formation of AMP, that is energically less costly than de novo synthesis. The protein is Adenine phosphoribosyltransferase of Serratia proteamaculans (strain 568).